A 264-amino-acid polypeptide reads, in one-letter code: Small ribosomal subunit protein uS2 (264 aa).

Over residues 243-253 (IEAAEDGEEVD) the composition is skewed to acidic residues. The disordered stretch occupies residues 243–264 (IEAAEDGEEVDNAQLTSSQGRS). Positions 255 to 264 (AQLTSSQGRS) are enriched in polar residues.

Belongs to the universal ribosomal protein uS2 family.

This chain is Small ribosomal subunit protein uS2, found in Deinococcus geothermalis (strain DSM 11300 / CIP 105573 / AG-3a).